Consider the following 293-residue polypeptide: 4-hydroxy-tetrahydrodipicolinate synthase (293 aa).

Thr-44 contacts pyruvate. Tyr-132 acts as the Proton donor/acceptor in catalysis. Lys-161 functions as the Schiff-base intermediate with substrate in the catalytic mechanism. Ile-205 serves as a coordination point for pyruvate.

It belongs to the DapA family. Homotetramer; dimer of dimers.

It is found in the cytoplasm. The enzyme catalyses L-aspartate 4-semialdehyde + pyruvate = (2S,4S)-4-hydroxy-2,3,4,5-tetrahydrodipicolinate + H2O + H(+). It functions in the pathway amino-acid biosynthesis; L-lysine biosynthesis via DAP pathway; (S)-tetrahydrodipicolinate from L-aspartate: step 3/4. In terms of biological role, catalyzes the condensation of (S)-aspartate-beta-semialdehyde [(S)-ASA] and pyruvate to 4-hydroxy-tetrahydrodipicolinate (HTPA). This Thermosipho africanus (strain TCF52B) protein is 4-hydroxy-tetrahydrodipicolinate synthase.